The chain runs to 278 residues: Large ribosomal subunit protein uL2 (278 aa).

Disordered stretches follow at residues 1–58 and 225–278; these read MAIR…GGGH and VMNP…KNKR. Basic residues predominate over residues 37 to 58; the sequence is LHGRGGRNAHGRITTRHKGGGH. Positions 253 to 267 are enriched in basic and acidic residues; the sequence is PEGRTRKNKASDKMI. A compositionally biased stretch (basic residues) spans 268-278; the sequence is VRRRRTGKNKR.

It belongs to the universal ribosomal protein uL2 family. Part of the 50S ribosomal subunit. Forms a bridge to the 30S subunit in the 70S ribosome.

Functionally, one of the primary rRNA binding proteins. Required for association of the 30S and 50S subunits to form the 70S ribosome, for tRNA binding and peptide bond formation. It has been suggested to have peptidyltransferase activity; this is somewhat controversial. Makes several contacts with the 16S rRNA in the 70S ribosome. The chain is Large ribosomal subunit protein uL2 from Rhodococcus erythropolis (strain PR4 / NBRC 100887).